The primary structure comprises 412 residues: Polyferredoxin protein MvhB (412 aa).

4Fe-4S ferredoxin-type domains follow at residues 1 to 29, 30 to 57, 67 to 96, 97 to 127, 138 to 166, 168 to 197, 207 to 236, 238 to 266, 276 to 305, 314 to 345, 357 to 386, and 385 to 412; these read MIVV…VTPE, DVIY…IEDL, GRIV…LDEG, KVKK…VEGI, EGPI…LEKV, GVIE…ISGK, RKFE…PKSS, LTVE…LDVE, EGLV…VVTR, EKVD…LVDM, KRVQ…LTDE, and DEKV…LSLK. The [4Fe-4S] cluster site is built by Cys-9, Cys-12, Cys-15, and Cys-19. [4Fe-4S] cluster-binding residues include Cys-76, Cys-79, Cys-82, Cys-86, Cys-107, Cys-110, Cys-113, Cys-117, Cys-146, Cys-149, Cys-152, Cys-156, Cys-177, Cys-180, Cys-183, Cys-187, Cys-216, Cys-219, Cys-222, Cys-226, Cys-246, Cys-249, Cys-252, and Cys-256. Cys-325, Cys-328, Cys-331, Cys-335, Cys-366, Cys-369, Cys-372, Cys-376, Cys-394, Cys-397, Cys-400, and Cys-404 together coordinate [4Fe-4S] cluster.

It depends on [4Fe-4S] cluster as a cofactor.

In Methanothermobacter marburgensis (strain ATCC BAA-927 / DSM 2133 / JCM 14651 / NBRC 100331 / OCM 82 / Marburg) (Methanobacterium thermoautotrophicum), this protein is Polyferredoxin protein MvhB (mvhB).